We begin with the raw amino-acid sequence, 807 residues long: Ribosome-releasing factor 2, mitochondrial (807 aa).

A mitochondrion-targeting transit peptide spans Met-1–Tyr-18. The region spanning Ala-27–Leu-315 is the tr-type G domain. GTP is bound by residues Ala-36–Thr-43, Asp-100–His-104, and Asn-154–Asp-157.

It belongs to the TRAFAC class translation factor GTPase superfamily. Classic translation factor GTPase family. EF-G/EF-2 subfamily.

It localises to the mitochondrion. Mitochondrial GTPase that mediates the disassembly of ribosomes from messenger RNA at the termination of mitochondrial protein biosynthesis. Not involved in the GTP-dependent ribosomal translocation step during translation elongation. The chain is Ribosome-releasing factor 2, mitochondrial from Candida albicans (strain SC5314 / ATCC MYA-2876) (Yeast).